A 201-amino-acid polypeptide reads, in one-letter code: Protein GrpE (201 aa).

A disordered region spans residues 1–32 (MTDRDRQPEDTTAPTGEPVVSKPYIMPDDPEP).

It belongs to the GrpE family. Homodimer.

It is found in the cytoplasm. Its function is as follows. Participates actively in the response to hyperosmotic and heat shock by preventing the aggregation of stress-denatured proteins, in association with DnaK and GrpE. It is the nucleotide exchange factor for DnaK and may function as a thermosensor. Unfolded proteins bind initially to DnaJ; upon interaction with the DnaJ-bound protein, DnaK hydrolyzes its bound ATP, resulting in the formation of a stable complex. GrpE releases ADP from DnaK; ATP binding to DnaK triggers the release of the substrate protein, thus completing the reaction cycle. Several rounds of ATP-dependent interactions between DnaJ, DnaK and GrpE are required for fully efficient folding. The sequence is that of Protein GrpE from Bradyrhizobium diazoefficiens (strain JCM 10833 / BCRC 13528 / IAM 13628 / NBRC 14792 / USDA 110).